Consider the following 377-residue polypeptide: RING finger protein 215 (377 aa).

At 1 to 22 the chain is on the cytoplasmic side; it reads MGPAARPALRSPPPPPPPPPSP. The tract at residues 1 to 22 is disordered; sequence MGPAARPALRSPPPPPPPPPSP. Residues 10-22 show a composition bias toward pro residues; sequence RSPPPPPPPPPSP. Residues 23–43 form a helical membrane-spanning segment; it reads LLLLLPLLPLWLGLAGPGAAA. At 44-250 the chain is on the extracellular side; the sequence is DGSEPAAGAG…GGSRAQEQKP (207 aa). An N-linked (GlcNAc...) asparagine glycan is attached at asparagine 186. The helical transmembrane segment at 251 to 271 threads the bilayer; the sequence is LQQLWNAILLVAMLLCTGLVV. Topologically, residues 272 to 377 are cytoplasmic; that stretch reads QAQRQASRQS…NVLGNRYSDD (106 aa). Residues 325–366 form an RING-type; atypical zinc finger; the sequence is CAVCLDYFCNKQWLRVLPCKHEFHRDCVDPWLMLQQTCPLCK.

The protein resides in the membrane. The polypeptide is RING finger protein 215 (RNF215) (Homo sapiens (Human)).